We begin with the raw amino-acid sequence, 132 residues long: Probable histone H2A.1 (132 aa).

Positions 1–22 (MAGRGKTLGSGSAKKATTRSSK) are disordered.

This sequence belongs to the histone H2A family. As to quaternary structure, the nucleosome is a histone octamer containing two molecules each of H2A, H2B, H3 and H4 assembled in one H3-H4 heterotetramer and two H2A-H2B heterodimers. The octamer wraps approximately 147 bp of DNA. Post-translationally, not ubiquitinated. In terms of tissue distribution, low level of expression; mainly in roots. Found in the root cap cells and in non dividing tissues of the plant, including the root elongation and maturation zones and the leaf veins.

It is found in the nucleus. Its subcellular location is the chromosome. Its function is as follows. Core component of nucleosome. Nucleosomes wrap and compact DNA into chromatin, limiting DNA accessibility to the cellular machineries which require DNA as a template. Histones thereby play a central role in transcription regulation, DNA repair, DNA replication and chromosomal stability. DNA accessibility is regulated via a complex set of post-translational modifications of histones, also called histone code, and nucleosome remodeling. The protein is Probable histone H2A.1 of Arabidopsis thaliana (Mouse-ear cress).